The following is a 281-amino-acid chain: 3'-5' exonuclease Snipper (281 aa).

A disordered region spans residues 19-52; that stretch reads DGARPDPNNDPEESFNEDEVTEANSVPAKSKKSR. Positions 27-39 are enriched in acidic residues; that stretch reads NDPEESFNEDEVT. The 199-residue stretch at 64–262 folds into the Exonuclease domain; the sequence is YVIAVDFEAT…MCKMVRDGAL (199 aa). 2 residues coordinate Mg(2+): Asp69 and Glu71. Glu71 functions as the Proton acceptor in the catalytic mechanism. AMP is bound by residues Glu71 and Ala72. Asp183 serves as a coordination point for Mg(2+). His240 serves as the catalytic Proton acceptor. His240 serves as a coordination point for AMP. Asp245 provides a ligand contact to Mg(2+).

Belongs to the ERI2 family. Requires Mg(2+) as cofactor.

It is found in the cytoplasm. The protein resides in the nucleus. Its subcellular location is the nucleolus. A broad-specificity exonuclease, capable of degrading both structure-specific DNA and RNA targets without sequence specificity in vitro. Requires two to five unpaired nucleotides in the 3' region for efficient binding and nuclease activity. Binds with higher affinity to RNA and DNA stem-loop substrates compared to single-stranded substrate. Binds to the 3'-end of histone mRNAs and degrades them, suggesting that it might play a role in histone mRNA decay after replication. Can readily cleave the histone stem-loop RNA beyond the -12 (UUU) position in the loop to produce -14 and then -16 oligonucleotide fragments for both the stem-loop and the reverse stem-loop. Cleaves both the single-stranded 3' flank as well as the double-stranded stem portion of histone stem-loop RNA. Might affect histone mRNA 3' processing thereby regulating histone protein expression. Has an important role in development and tissue formation. Might have a role in 5.8S rRNA precursor processing. The sequence is that of 3'-5' exonuclease Snipper from Drosophila melanogaster (Fruit fly).